The sequence spans 118 residues: Ribosome-binding factor A (118 aa).

The protein belongs to the RbfA family. In terms of assembly, monomer. Binds 30S ribosomal subunits, but not 50S ribosomal subunits or 70S ribosomes.

It is found in the cytoplasm. Functionally, one of several proteins that assist in the late maturation steps of the functional core of the 30S ribosomal subunit. Associates with free 30S ribosomal subunits (but not with 30S subunits that are part of 70S ribosomes or polysomes). Required for efficient processing of 16S rRNA. May interact with the 5'-terminal helix region of 16S rRNA. The protein is Ribosome-binding factor A of Streptococcus pyogenes serotype M1.